A 308-amino-acid chain; its full sequence is Phosphoribosylaminoimidazole-succinocarboxamide synthase (308 aa).

Belongs to the SAICAR synthetase family.

It catalyses the reaction 5-amino-1-(5-phospho-D-ribosyl)imidazole-4-carboxylate + L-aspartate + ATP = (2S)-2-[5-amino-1-(5-phospho-beta-D-ribosyl)imidazole-4-carboxamido]succinate + ADP + phosphate + 2 H(+). Its pathway is purine metabolism; IMP biosynthesis via de novo pathway; 5-amino-1-(5-phospho-D-ribosyl)imidazole-4-carboxamide from 5-amino-1-(5-phospho-D-ribosyl)imidazole-4-carboxylate: step 1/2. This chain is Phosphoribosylaminoimidazole-succinocarboxamide synthase, found in Stenotrophomonas maltophilia (strain R551-3).